We begin with the raw amino-acid sequence, 152 residues long: D-aminoacyl-tRNA deacylase (152 aa).

The Gly-cisPro motif, important for rejection of L-amino acids signature appears at 142–143; sequence GP.

The protein belongs to the DTD family. In terms of assembly, homodimer.

The protein resides in the cytoplasm. The enzyme catalyses glycyl-tRNA(Ala) + H2O = tRNA(Ala) + glycine + H(+). The catalysed reaction is a D-aminoacyl-tRNA + H2O = a tRNA + a D-alpha-amino acid + H(+). An aminoacyl-tRNA editing enzyme that deacylates mischarged D-aminoacyl-tRNAs. Also deacylates mischarged glycyl-tRNA(Ala), protecting cells against glycine mischarging by AlaRS. Acts via tRNA-based rather than protein-based catalysis; rejects L-amino acids rather than detecting D-amino acids in the active site. By recycling D-aminoacyl-tRNA to D-amino acids and free tRNA molecules, this enzyme counteracts the toxicity associated with the formation of D-aminoacyl-tRNA entities in vivo and helps enforce protein L-homochirality. The polypeptide is D-aminoacyl-tRNA deacylase (Burkholderia ambifaria (strain ATCC BAA-244 / DSM 16087 / CCUG 44356 / LMG 19182 / AMMD) (Burkholderia cepacia (strain AMMD))).